The chain runs to 161 residues: Pleiotrophin-B (161 aa).

Positions 1 to 23 (MHHQHGLFMLALLAFLLVMTVLG) are cleaved as a signal peptide. Cystine bridges form between Cys41–Cys70, Cys49–Cys79, Cys56–Cys83, Cys93–Cys125, and Cys103–Cys135. Chondroitin sulfate binding regions lie at residues 86–93 (KKQFGAEC) and 117–125 (KRALHNAEC). Residues 136–161 (GKVTKPKLQESKKKKKEGKNKEKLLD) are disordered. The interval 141–161 (PKLQESKKKKKEGKNKEKLLD) is chondroitin sulfate A binding.

Belongs to the pleiotrophin family. In terms of tissue distribution, expressed in high levels in brain and eye. Lower levels in bone. In the tailbud embryo stage, it is expressed exclusively in the central nervous system, especially in the hind region of the brain.

It localises to the secreted. Secreted growth factor that mediates its signal through cell-surface proteoglycan and non-proteoglycan receptors. Binds cell-surface proteoglycan receptor via their chondroitin sulfate (CS) groups. Thereby regulates many processes like cell proliferation, cell survival, cell growth, cell differentiation and cell migration. Has antibacterial activity against both Gram-positive and Gram-negative bacteria. This chain is Pleiotrophin-B (ptn-b), found in Xenopus laevis (African clawed frog).